The chain runs to 144 residues: MNPQPSGMTWNLLLLTWLVALISTLSALFIGEVMGQAPCVLCWFQRAFMFPLTVILAIACYRSDFTVWRYALPLTVIGAALAFVHTLLYAGLIPQPIQPCTATGPSCSGAGMTLFGVVPLPALALFAFIIIAILLIIIRRRTTP.

The helical transmembrane segment at 10–29 (WNLLLLTWLVALISTLSALF) threads the bilayer. The cysteines at positions 39 and 42 are disulfide-linked. The next 2 helical transmembrane spans lie at 44 to 63 (FQRA…CYRS) and 70 to 87 (YALP…VHTL). Cysteine 100 and cysteine 107 are disulfide-bonded. A helical membrane pass occupies residues 116–138 (GVVPLPALALFAFIIIAILLIII).

It belongs to the DsbB family. BdbC subfamily.

It is found in the cell inner membrane. Functionally, required for disulfide bond formation in some proteins. In Metapseudomonas resinovorans (Pseudomonas resinovorans), this protein is Probable disulfide formation protein.